Reading from the N-terminus, the 123-residue chain is WAP four-disulfide core domain protein 5 (123 aa).

The first 24 residues, 1–24, serve as a signal peptide directing secretion; the sequence is MRIQSLLLLGVLLAVGSQLPAAFG. WAP domains are found at residues 27–73 and 74–121; these read KGEK…CVPR and ISVK…RDPA. Disulfide bonds link C34-C62, C41-C66, C49-C61, C55-C70, C81-C109, C88-C113, C96-C108, and C102-C117.

It is found in the secreted. Functionally, putative acid-stable proteinase inhibitor. This chain is WAP four-disulfide core domain protein 5 (WFDC5), found in Callithrix jacchus (White-tufted-ear marmoset).